Reading from the N-terminus, the 946-residue chain is Inter-alpha-trypsin inhibitor heavy chain H2 (946 aa).

The first 18 residues, 1-18, serve as a signal peptide directing secretion; it reads MQRLACVLIWLFLLEEQA. A propeptide spanning residues 19-54 is cleaved from the precursor; the sequence is FEIPANEYSEFAGYSNLVELAPDKFPFVQENRRYQR. Positions 56–185 constitute a VIT domain; sequence LPEESGEMTD…KVQFELHYQE (130 aa). The residue at position 60 (Ser60) is a Phosphoserine. N-linked (GlcNAc...) asparagine glycosylation is found at Asn118 and Asn263. Glu282 and Glu283 each carry 4-carboxyglutamate. A VWFA domain is found at 308 to 468; sequence PKNILFVIDV…YDFLKRLSNE (161 aa). A glycan (N-linked (GlcNAc...) asparagine) is linked at Asn445. Ser466 carries the post-translational modification Phosphoserine. Residue Asn578 is glycosylated (N-linked (GlcNAc...) asparagine). Asp702 is modified (aspartate 1-(chondroitin 4-sulfate)-ester). A propeptide spanning residues 703–946 is cleaved from the precursor; that stretch reads PHFIIYLPKS…PQLYSFLKRP (244 aa). Ser886 carries the phosphoserine modification.

This sequence belongs to the ITIH family. In terms of assembly, I-alpha-I plasma protease inhibitors are assembled from one or two heavy chains (HC) and one light chain, bikunin. Inter-alpha-inhibitor (I-alpha-I) is composed of ITIH1/HC1, ITIH2/HC2 and bikunin. Heavy chains are linked to bikunin via chondroitin 4-sulfate esterified to the alpha-carboxyl of the C-terminal aspartate after propeptide cleavage. Post-translationally, phosphorylated by FAM20C in the extracellular medium.

It localises to the secreted. In terms of biological role, may act as a carrier of hyaluronan in serum or as a binding protein between hyaluronan and other matrix protein, including those on cell surfaces in tissues to regulate the localization, synthesis and degradation of hyaluronan which are essential to cells undergoing biological processes. The polypeptide is Inter-alpha-trypsin inhibitor heavy chain H2 (ITIH2) (Mesocricetus auratus (Golden hamster)).